We begin with the raw amino-acid sequence, 122 residues long: Holo-[acyl-carrier-protein] synthase (122 aa).

Residues Asp-9 and Glu-58 each coordinate Mg(2+).

This sequence belongs to the P-Pant transferase superfamily. AcpS family. The cofactor is Mg(2+).

The protein resides in the cytoplasm. It carries out the reaction apo-[ACP] + CoA = holo-[ACP] + adenosine 3',5'-bisphosphate + H(+). Functionally, transfers the 4'-phosphopantetheine moiety from coenzyme A to a Ser of acyl-carrier-protein. This Chlamydia felis (strain Fe/C-56) (Chlamydophila felis) protein is Holo-[acyl-carrier-protein] synthase.